The primary structure comprises 177 residues: ATP synthase subunit delta (177 aa).

The protein belongs to the ATPase delta chain family. F-type ATPases have 2 components, F(1) - the catalytic core - and F(0) - the membrane proton channel. F(1) has five subunits: alpha(3), beta(3), gamma(1), delta(1), epsilon(1). F(0) has three main subunits: a(1), b(2) and c(10-14). The alpha and beta chains form an alternating ring which encloses part of the gamma chain. F(1) is attached to F(0) by a central stalk formed by the gamma and epsilon chains, while a peripheral stalk is formed by the delta and b chains.

The protein localises to the cell inner membrane. In terms of biological role, f(1)F(0) ATP synthase produces ATP from ADP in the presence of a proton or sodium gradient. F-type ATPases consist of two structural domains, F(1) containing the extramembraneous catalytic core and F(0) containing the membrane proton channel, linked together by a central stalk and a peripheral stalk. During catalysis, ATP synthesis in the catalytic domain of F(1) is coupled via a rotary mechanism of the central stalk subunits to proton translocation. Functionally, this protein is part of the stalk that links CF(0) to CF(1). It either transmits conformational changes from CF(0) to CF(1) or is implicated in proton conduction. This is ATP synthase subunit delta from Neisseria meningitidis serogroup B (strain ATCC BAA-335 / MC58).